A 527-amino-acid chain; its full sequence is Bifunctional purine biosynthesis protein PurH (527 aa).

Residues 1–149 (MASDFLPVRR…KNFARVAVAT (149 aa)) form the MGS-like domain.

It belongs to the PurH family.

It carries out the reaction (6R)-10-formyltetrahydrofolate + 5-amino-1-(5-phospho-beta-D-ribosyl)imidazole-4-carboxamide = 5-formamido-1-(5-phospho-D-ribosyl)imidazole-4-carboxamide + (6S)-5,6,7,8-tetrahydrofolate. The catalysed reaction is IMP + H2O = 5-formamido-1-(5-phospho-D-ribosyl)imidazole-4-carboxamide. Its pathway is purine metabolism; IMP biosynthesis via de novo pathway; 5-formamido-1-(5-phospho-D-ribosyl)imidazole-4-carboxamide from 5-amino-1-(5-phospho-D-ribosyl)imidazole-4-carboxamide (10-formyl THF route): step 1/1. The protein operates within purine metabolism; IMP biosynthesis via de novo pathway; IMP from 5-formamido-1-(5-phospho-D-ribosyl)imidazole-4-carboxamide: step 1/1. This is Bifunctional purine biosynthesis protein PurH from Xanthomonas oryzae pv. oryzae (strain MAFF 311018).